The following is a 467-amino-acid chain: Putative odorant receptor 85e (467 aa).

At 1–60 the chain is on the cytoplasmic side; that stretch reads MASLQFHGNVDADIRYDISLDPARESNLFRLLMGLQLANGTKPSPRLPKWWPKRLEMIGK. A helical transmembrane segment spans residues 61-81; that stretch reads VLPKAYCSMVIFTSLHLGVLF. Residues 82–98 are Extracellular-facing; that stretch reads TKTTLDVLPTGELQAIT. A helical membrane pass occupies residues 99-119; that stretch reads DALTMTIIYFFTGYGTIYWCL. Residues 120–159 are Cytoplasmic-facing; it reads RSRRLLAYMEHMNREYRHHSLAGVTFVSSHAAFRMSRNFT. Residues 160-180 traverse the membrane as a helical segment; it reads VVWIMSCLLGVISWGVSPLML. At 181–212 the chain is on the extracellular side; that stretch reads GIRMLPLQCWYPFDALGPGTYTAVYATQLFGQ. A helical membrane pass occupies residues 213–233; sequence IMVGMTFGFGGSLFVTLSLLL. Over 234 to 286 the chain is Cytoplasmic; it reads LGQFDVLYCSLKNLDAHTKLLGGESVNGLSSLQEELLLGDSKRELNQYVLLQE. Residues 287-307 traverse the membrane as a helical segment; that stretch reads HPTDLLRLSAGRKCPDQGNAF. The Extracellular portion of the chain corresponds to 308-334; the sequence is HNALVECIRLHRFILHCSQELENLFSP. Residues 335–355 traverse the membrane as a helical segment; sequence YCLVKSLQITFQLCLLVFVGV. Residues 356 to 367 are Cytoplasmic-facing; it reads SGTREVLRIVNQ. A helical transmembrane segment spans residues 368–388; it reads LQYLGLTIFELLMFTYCGELL. The Extracellular segment spans residues 389–467; sequence SRHSIRSGDA…LAAKKTESEL (79 aa).

This sequence belongs to the insect chemoreceptor superfamily. Heteromeric odorant receptor channel (TC 1.A.69) family. Or2a subfamily. Interacts with Orco. Complexes exist early in the endomembrane system in olfactory sensory neurons (OSNs), coupling these complexes to the conserved ciliary trafficking pathway. In terms of tissue distribution, expressed in 15% of the 120 sensory neurons within the maxillary palp.

The protein localises to the cell membrane. Functionally, odorant receptor which mediates acceptance or avoidance behavior, depending on its substrates. The odorant receptor repertoire encodes a large collection of odor stimuli that vary widely in identity, intensity, and duration. May form a complex with Orco to form odorant-sensing units, providing sensitive and prolonged odorant signaling and calcium permeability. The polypeptide is Putative odorant receptor 85e (Or85e) (Drosophila melanogaster (Fruit fly)).